Reading from the N-terminus, the 486-residue chain is MESTSNLIKNANEFLDSLNEINDKLKEVVGKIKNKTIDKTKLSDIILTLEKNLEILQDLKSKMEFLEFDSPYKNVGKLKGGYDSEGLQEIASYSTYLRRIASEKKGILERVRHALVAHKIALAHLTEDIGNINLPPNLPLDGSYKKIMFEFPPYLVTTYKEFLDILEPKGRGILTSYTISLIVIDKGKREFKRIKVEDKNYEKYIKEKFGNAIITSIKRNFSKNKIIDDQYVRRVLAIGYLNTYKDEIEKAINEKIDKLLNEEEKKYLNRYLELCLLFREEADISGGILDVRCMEERKLKELELKEILEKEGLYRDGEPIEPLKKAIKIKNELSKKISKDILIKRFSEDVFKFYLYKTPDERARSNLFPSIMITPQRGFLSWMSVDGINCVDVLDLKFKLEEELPKYQIPLKNIGGVALYLIHDWDAVERFNFKKKDIEDLLKKIALIEPIKEILKDKNVDVSKLEKFGKVKKEKTKKFLDLLSGL.

This is an uncharacterized protein from Methanocaldococcus jannaschii (strain ATCC 43067 / DSM 2661 / JAL-1 / JCM 10045 / NBRC 100440) (Methanococcus jannaschii).